The primary structure comprises 840 residues: MMMHMAETRTRPAPMMAASLQMVTADMIAAAAKRAEQRIAPLWPLRNFVAVNPYLGLLDYSFETAAELLARRAGARTTAPRAFYAQAIRDGRITDADLASALAEGSPSPGAPATVEALKAFALSNAPEPTFTTLPTVADVAREITGVNWADIVTDSISAWAGAYFDLGQSYWRSPWKPMSAYAAWRAEATYDRTPHIRGAQGFHQALRELPESAMETIIAAVEMLHIPADGLEAYLHRLLLTIHGWAGYARYLRWEAELYGGADHTLTDLLAIRLVWEVALWRSFASRGMAEAWRTRSHELVGDQLDAALQRAIAGDLLLQRAFEKAYQRQLFACLGTPKPVKHATRKRAQAAFCIDVRSEIFRRALETVTDEIETIGFAGFFGFPIEYVPLAETRGGAQCPVLLTPQFVIAESVGGASETEVTAVIEKRALNQRVAKVWRMFKFGPVSCFGFVGPVGLAYVRKLLLDTLGITRPVPHPATFGLDARTRERVKPSLEPRAIGGRTTGMSPEQRVNVAEGALKAMSLTSNFARLVLLAGHGSTTVNNPHATGLDCGACGGHTGEANVRVAVQILNDPAARTGLKARGIVIPDDTVFVAGLHDTTTDDVTIFDKNDIPASHADDLRRLEADLAAAGRLARAERAALLKIDPKGNIDGAVRQRSRDWSQVRPEWGLAGCAAFIAAPRDRTAGAKLDGRSFLHNYDWRQDEGFGVLELIMTAPMIVASWINLQYYGSTVDNRVFGSGNKTLHNVVGTLGVLEGNSGDLRVGLPWQSVHDGERYVHEPMRLHVMIEAPIEAMTAIIARHEQVRQLLDNGWLYLFALDERGKVTHTYAGGLRWEAC.

Zn(2+)-binding residues include C355, D357, H539, and C554.

The protein belongs to the inorganic carbon transporter (TC 9.A.2) DabA family. Forms a complex with DabB. Zn(2+) serves as cofactor.

The protein localises to the cell membrane. In terms of biological role, part of an energy-coupled inorganic carbon pump. This Roseiflexus castenholzii (strain DSM 13941 / HLO8) protein is Probable inorganic carbon transporter subunit DabA.